The chain runs to 70 residues: Conotoxin ArMKLT2-0112 (70 aa).

Residues 1-22 (MKLTCVLIIAVLFLTACQLTTG) form the signal peptide. A propeptide spanning residues 23-40 (EQKDHALRSTDKNSKLTR) is cleaved from the precursor. At Q41 the chain carries Pyrrolidone carboxylic acid. Disulfide bonds link C42-C56, C49-C60, and C55-C67.

It belongs to the conotoxin O1 superfamily. Expressed by the venom duct.

It localises to the secreted. This Conus arenatus (Sand-dusted cone) protein is Conotoxin ArMKLT2-0112.